Here is a 403-residue protein sequence, read N- to C-terminus: Phospholipase A1-II 2 (403 aa).

The Acyl-ester intermediate role is filled by serine 218. Residues serine 218, aspartate 286, and histidine 323 each act as charge relay system in the active site. The interval glycine 381–aspartate 403 is disordered. Positions glutamate 392–aspartate 403 are enriched in acidic residues.

It belongs to the AB hydrolase superfamily. Lipase family.

The protein localises to the cytoplasm. Acylhydrolase that catalyzes the hydrolysis of phospholipids at the sn-1 position. This Oryza sativa subsp. indica (Rice) protein is Phospholipase A1-II 2.